The following is a 75-amino-acid chain: Small ribosomal subunit protein bS21 (75 aa).

Belongs to the bacterial ribosomal protein bS21 family.

This is Small ribosomal subunit protein bS21 from Brucella abortus (strain S19).